Consider the following 118-residue polypeptide: Small ribosomal subunit protein uS13 (118 aa).

Positions 94–118 (GLPVRGQRTKTNARTRKGPRKPIRK) are disordered.

This sequence belongs to the universal ribosomal protein uS13 family. In terms of assembly, part of the 30S ribosomal subunit. Forms a loose heterodimer with protein S19. Forms two bridges to the 50S subunit in the 70S ribosome.

Functionally, located at the top of the head of the 30S subunit, it contacts several helices of the 16S rRNA. In the 70S ribosome it contacts the 23S rRNA (bridge B1a) and protein L5 of the 50S subunit (bridge B1b), connecting the 2 subunits; these bridges are implicated in subunit movement. Contacts the tRNAs in the A and P-sites. The chain is Small ribosomal subunit protein uS13 from Marinobacter nauticus (strain ATCC 700491 / DSM 11845 / VT8) (Marinobacter aquaeolei).